The sequence spans 314 residues: GTPase-interacting component 1 (314 aa).

Disordered stretches follow at residues 112-156 (SRRH…KHDV), 199-221 (TMDS…QLDS), and 241-261 (LGDS…SFSG). The CRIB domain maps to 126–139 (ISTPFDFHHISHAN). Over residues 140–156 (GKREDNPLESHEEKHDV) the composition is skewed to basic and acidic residues. The span at 208-221 (ETNNTPNGNKQLDS) shows a compositional bias: polar residues. Over residues 251 to 260 (PSSPSVSSFS) the composition is skewed to low complexity.

The protein belongs to the BORG/CEP family. In terms of assembly, interacts with GTP-bound CDC42.

It is found in the bud neck. The protein resides in the bud tip. The protein localises to the cytoplasm. Its subcellular location is the cell cortex. It localises to the cytoskeleton. In terms of biological role, required for cell size and shape control, bud site selection, bud emergence, actin cytoskeletal organization, mitotic spindle orientation/positioning, and mating projection formation in response to mating pheromone. The chain is GTPase-interacting component 1 (GIC1) from Saccharomyces cerevisiae (strain ATCC 204508 / S288c) (Baker's yeast).